A 356-amino-acid polypeptide reads, in one-letter code: Protein-glutamate methylesterase/protein-glutamine glutaminase 4 (356 aa).

Positions 15–132 constitute a Response regulatory domain; the sequence is RVLVVDDSAV…SVGEMTADLV (118 aa). Asp66 carries the post-translational modification 4-aspartylphosphate. A CheB-type methylesterase domain is found at 162 to 348; the sequence is ARTTLQVVAI…PLDRIAPEIL (187 aa). Residues Ser174, His200, and Asp296 contribute to the active site.

It belongs to the CheB family. Phosphorylated by CheA. Phosphorylation of the N-terminal regulatory domain activates the methylesterase activity.

The protein resides in the cytoplasm. It catalyses the reaction [protein]-L-glutamate 5-O-methyl ester + H2O = L-glutamyl-[protein] + methanol + H(+). It carries out the reaction L-glutaminyl-[protein] + H2O = L-glutamyl-[protein] + NH4(+). Involved in chemotaxis. Part of a chemotaxis signal transduction system that modulates chemotaxis in response to various stimuli. Catalyzes the demethylation of specific methylglutamate residues introduced into the chemoreceptors (methyl-accepting chemotaxis proteins or MCP) by CheR. Also mediates the irreversible deamidation of specific glutamine residues to glutamic acid. The polypeptide is Protein-glutamate methylesterase/protein-glutamine glutaminase 4 (Anaeromyxobacter dehalogenans (strain 2CP-C)).